A 417-amino-acid polypeptide reads, in one-letter code: Serine hydroxymethyltransferase (417 aa).

(6S)-5,6,7,8-tetrahydrofolate-binding positions include Leu120 and 124–126 (GHL). The residue at position 229 (Lys229) is an N6-(pyridoxal phosphate)lysine. 354–356 (SPF) is a (6S)-5,6,7,8-tetrahydrofolate binding site.

The protein belongs to the SHMT family. Homodimer. The cofactor is pyridoxal 5'-phosphate.

It is found in the cytoplasm. It catalyses the reaction (6R)-5,10-methylene-5,6,7,8-tetrahydrofolate + glycine + H2O = (6S)-5,6,7,8-tetrahydrofolate + L-serine. It functions in the pathway one-carbon metabolism; tetrahydrofolate interconversion. The protein operates within amino-acid biosynthesis; glycine biosynthesis; glycine from L-serine: step 1/1. Functionally, catalyzes the reversible interconversion of serine and glycine with tetrahydrofolate (THF) serving as the one-carbon carrier. This reaction serves as the major source of one-carbon groups required for the biosynthesis of purines, thymidylate, methionine, and other important biomolecules. Also exhibits THF-independent aldolase activity toward beta-hydroxyamino acids, producing glycine and aldehydes, via a retro-aldol mechanism. The sequence is that of Serine hydroxymethyltransferase from Acinetobacter baumannii (strain AB307-0294).